The sequence spans 54 residues: Large ribosomal subunit protein bL33A (54 aa).

It belongs to the bacterial ribosomal protein bL33 family.

The protein is Large ribosomal subunit protein bL33A of Mycolicibacterium paratuberculosis (strain ATCC BAA-968 / K-10) (Mycobacterium paratuberculosis).